The following is a 617-amino-acid chain: MDLKTAVFNAARDGKLRLLTKLLASKSKEEVSSLISEKTNGATPLLMAARYGHLDMVEFLLEQCSASIEVGGSVNFDGETIEGAPPLWAASAAGHLKVVQSLLNHGASVNNTTLTNSTPLRAACFDGHLEIVKYLVEHKADLEVSNRHGHTCLMISCYKGHKEIAQYLLEKGADVNRKSVKGNTALHDCAESGSLDIMKMLLMYCAKMEKDGYGMTPLLSASVTGHTNIVDFLTHHAQTSKTERINALELLGATFVDKKRDLLGALKYWKKAMNMRYSDRTNIISKPVPQTLIMAYDYAKEVNSAEELEGLIADPDEMRMQALLIRERILGPSHPDTSYYIRYRGAVYADSGNFKRCINLWKYALDMQQSNLDPLSPMTASSLLSFAELFSFMLQDRAKGLLGTTVTFDDLMGILCKSVLEIERAIKQTQCPADPLQLNKALSIILHLICLLEKVPCTLEQDHFKKQTIYRFLKLHPRGKNNFSPLHLAVDKNTTCVGRYPVCKFPSLQVTAILIECGADVNVRDSDDNSPLHIAALNNHPDIMNLLIKSGAHFDATNLHKQTASDLLDEKEIAKNLIQPINHTTLQCLAARVIVNHRIYYKGHIPEKLETFVSLHR.

The residue at position 1 (Met1) is an N-acetylmethionine. ANK repeat units follow at residues 2–31 (DLKTAVFNAARDGKLRLLTKLLASKSKEEV), 40–70 (NGATPLLMAARYGHLDMVEFLLEQCSASIEV), 82–111 (EGAPPLWAASAAGHLKVVQSLLNHGASVNN), 115–144 (TNSTPLRAACFDGHLEIVKYLVEHKADLEV), 148–177 (HGHTCLMISCYKGHKEIAQYLLEKGADVNR), 181–210 (KGNTALHDCAESGSLDIMKMLLMYCAKMEK), and 213–242 (YGMTPLLSASVTGHTNIVDFLTHHAQTSKT). TPR repeat units follow at residues 245–279 (INALELLGATFVDKKRDLLGALKYWKKAMNMRYSD) and 338–371 (SYYIRYRGAVYADSGNFKRCINLWKYALDMQQSN). 2 ANK repeats span residues 481–523 (NNFS…DVNV) and 527–556 (DDNSPLHIAALNNHPDIMNLLIKSGAHFDA).

Belongs to the fem-1 family. In terms of assembly, component of a Cul2-RING (CRL2) E3 ubiquitin-protein ligase complex, also named ECS (Elongin BC-CUL2/5-SOCS-box protein) complex, composed of CUL2, Elongin BC (ELOB and ELOC), RBX1 and substrate-specific adapter FEM1C. In terms of tissue distribution, widely expressed. Highly expressed in kidney, cardiac tissue, skeletal muscle and testis. Expressed at lower levels in other tissues, including cartilage.

Its pathway is protein modification; protein ubiquitination. Functionally, substrate-recognition component of a Cul2-RING (CRL2) E3 ubiquitin-protein ligase complex of the DesCEND (destruction via C-end degrons) pathway, which recognizes a C-degron located at the extreme C terminus of target proteins, leading to their ubiquitination and degradation. The C-degron recognized by the DesCEND pathway is usually a motif of less than ten residues and can be present in full-length proteins, truncated proteins or proteolytically cleaved forms. The CRL2(FEM1C) complex specifically recognizes proteins with an arginine at the C-terminus: recognizes and binds proteins ending with -Lys/Arg-Xaa-Arg and -Lys/Arg-Xaa-Xaa-Arg C-degrons, such as SIL1 or OR51B2, leading to their ubiquitination and degradation. The CRL2(FEM1C) complex mediates ubiquitination and degradation of truncated MSRB1/SEPX1 selenoproteins produced by failed UGA/Sec decoding. Promotes ubiquitination and degradation of SLBP. This chain is Protein fem-1 homolog C, found in Homo sapiens (Human).